We begin with the raw amino-acid sequence, 504 residues long: Flavin-dependent halogenase armH3 (504 aa).

FAD is bound by residues Gly-16, Ala-19, Glu-49, and Ala-149. Residues Ser-329 and Gly-330 each contribute to the chloride site. FAD is bound at residue Ile-331. Positions 444–475 are disordered; sequence NNLRTPVDTGAADVKAKHAPSETDAQNPLQSM.

This sequence belongs to the flavin-dependent halogenase family.

The catalysed reaction is melleolide F + FADH2 + chloride + O2 = 6'-chloromelleolide F + FAD + 2 H2O + H(+). Flavin-dependent halogenase involved in the biosynthesis of melleolides, a range of antifungal and phytotoxic polyketide derivatives composed of an orsellinic acid (OA) moiety esterified to various sesquiterpene alcohols. The halogenase catalyzes the transfer of a single chlorine atom to the melleolide backbone, resulting in a 6'-chloromelleolide product. The enzyme acts on free substrate and does not depend on carrier-protein-dependent acceptor molecules. The sequence is that of Flavin-dependent halogenase armH3 from Armillaria mellea (Honey mushroom).